Consider the following 221-residue polypeptide: GTP cyclohydrolase III (221 aa).

It belongs to the archaeal-type GTP cyclohydrolase family.

It carries out the reaction GTP + 3 H2O = 2-amino-5-formylamino-6-(5-phospho-D-ribosylamino)pyrimidin-4(3H)-one + 2 phosphate + 2 H(+). In terms of biological role, catalyzes the formation of 2-amino-5-formylamino-6-ribofuranosylamino-4(3H)-pyrimidinone ribonucleotide monophosphate and inorganic phosphate from GTP. Also has an independent pyrophosphate phosphohydrolase activity. The protein is GTP cyclohydrolase III of Pyrobaculum neutrophilum (strain DSM 2338 / JCM 9278 / NBRC 100436 / V24Sta) (Thermoproteus neutrophilus).